We begin with the raw amino-acid sequence, 254 residues long: Short-chain dehydrogenase/reductase SDRA (254 aa).

Residue 15-39 (IVTASTQGIGFGITERFGLEGASVV) coordinates NADP(+). Ser146 contributes to the substrate binding site. The Proton acceptor role is filled by Tyr159. The short motif at 252-254 (SRL) is the Microbody targeting signal element.

The protein belongs to the short-chain dehydrogenases/reductases (SDR) family.

The protein localises to the peroxisome. Functionally, involved with IBR3 and IBR10 in the peroxisomal beta-oxidation of indole-3-butyric acid (IBA) to form indole-3-acetic acid (IAA), a biologically active auxin. May be responsible for catalyzing the dehydrogenation step in the conversion of IBA. May be involved in the peroxisomal activation of 2,4-dichlorophenoxybutyric acid (2,4-DB), a precursor of active auxins that inhibit root growth. This chain is Short-chain dehydrogenase/reductase SDRA, found in Arabidopsis thaliana (Mouse-ear cress).